The following is a 194-amino-acid chain: Large ribosomal subunit protein eL15 (194 aa).

The disordered stretch occupies residues 165-194 (AGKKGRGLRNKGKGAEKVRPSIRANEGKGK). Residues 167–176 (KKGRGLRNKG) show a composition bias toward basic residues. The span at 177–194 (KGAEKVRPSIRANEGKGK) shows a compositional bias: basic and acidic residues.

Belongs to the eukaryotic ribosomal protein eL15 family. As to quaternary structure, part of the 50S ribosomal subunit.

In Pyrococcus furiosus (strain ATCC 43587 / DSM 3638 / JCM 8422 / Vc1), this protein is Large ribosomal subunit protein eL15.